A 284-amino-acid polypeptide reads, in one-letter code: Formamidopyrimidine-DNA glycosylase (284 aa).

The active-site Schiff-base intermediate with DNA is proline 2. The active-site Proton donor is the glutamate 3. The active-site Proton donor; for beta-elimination activity is the lysine 60. Residues histidine 99, arginine 118, and arginine 163 each coordinate DNA. An FPG-type zinc finger spans residues 248 to 282; it reads WVYGRQGQPCRTCGQTIERIKLVGRSTHFCPQCQP. Arginine 272 (proton donor; for delta-elimination activity) is an active-site residue.

Belongs to the FPG family. As to quaternary structure, monomer. Zn(2+) is required as a cofactor.

It catalyses the reaction Hydrolysis of DNA containing ring-opened 7-methylguanine residues, releasing 2,6-diamino-4-hydroxy-5-(N-methyl)formamidopyrimidine.. The enzyme catalyses 2'-deoxyribonucleotide-(2'-deoxyribose 5'-phosphate)-2'-deoxyribonucleotide-DNA = a 3'-end 2'-deoxyribonucleotide-(2,3-dehydro-2,3-deoxyribose 5'-phosphate)-DNA + a 5'-end 5'-phospho-2'-deoxyribonucleoside-DNA + H(+). Involved in base excision repair of DNA damaged by oxidation or by mutagenic agents. Acts as a DNA glycosylase that recognizes and removes damaged bases. Has a preference for oxidized purines, such as 7,8-dihydro-8-oxoguanine (8-oxoG). Has AP (apurinic/apyrimidinic) lyase activity and introduces nicks in the DNA strand. Cleaves the DNA backbone by beta-delta elimination to generate a single-strand break at the site of the removed base with both 3'- and 5'-phosphates. The chain is Formamidopyrimidine-DNA glycosylase from Acaryochloris marina (strain MBIC 11017).